Consider the following 591-residue polypeptide: Aspartate--tRNA ligase (591 aa).

Glu171 is an L-aspartate binding site. The interval 195-198 (QLFK) is aspartate. Arg217 serves as a coordination point for L-aspartate. ATP-binding positions include 217–219 (RDE) and Gln226. His448 is a binding site for L-aspartate. Position 482 (Glu482) interacts with ATP. Arg489 is an L-aspartate binding site. Position 534–537 (534–537 (GLDR)) interacts with ATP.

It belongs to the class-II aminoacyl-tRNA synthetase family. Type 1 subfamily. In terms of assembly, homodimer.

It is found in the cytoplasm. The enzyme catalyses tRNA(Asp) + L-aspartate + ATP = L-aspartyl-tRNA(Asp) + AMP + diphosphate. Functionally, catalyzes the attachment of L-aspartate to tRNA(Asp) in a two-step reaction: L-aspartate is first activated by ATP to form Asp-AMP and then transferred to the acceptor end of tRNA(Asp). This Edwardsiella ictaluri (strain 93-146) protein is Aspartate--tRNA ligase.